A 120-amino-acid polypeptide reads, in one-letter code: Ribonuclease P protein component (120 aa).

This sequence belongs to the RnpA family. As to quaternary structure, consists of a catalytic RNA component (M1 or rnpB) and a protein subunit.

It carries out the reaction Endonucleolytic cleavage of RNA, removing 5'-extranucleotides from tRNA precursor.. Functionally, RNaseP catalyzes the removal of the 5'-leader sequence from pre-tRNA to produce the mature 5'-terminus. It can also cleave other RNA substrates such as 4.5S RNA. The protein component plays an auxiliary but essential role in vivo by binding to the 5'-leader sequence and broadening the substrate specificity of the ribozyme. This is Ribonuclease P protein component from Acidothermus cellulolyticus (strain ATCC 43068 / DSM 8971 / 11B).